The sequence spans 95 residues: Protein TusB (95 aa).

It belongs to the DsrH/TusB family. As to quaternary structure, heterohexamer, formed by a dimer of trimers. The hexameric TusBCD complex contains 2 copies each of TusB, TusC and TusD. The TusBCD complex interacts with TusE.

It localises to the cytoplasm. Functionally, part of a sulfur-relay system required for 2-thiolation of 5-methylaminomethyl-2-thiouridine (mnm(5)s(2)U) at tRNA wobble positions. The polypeptide is Protein TusB (Escherichia coli O45:K1 (strain S88 / ExPEC)).